A 250-amino-acid polypeptide reads, in one-letter code: Probable transcriptional regulatory protein ckrop_1032 (250 aa).

Positions 1-22 are disordered; it reads MSGHSKWATTKHKKAANDAKRG.

The protein belongs to the TACO1 family.

The protein resides in the cytoplasm. The sequence is that of Probable transcriptional regulatory protein ckrop_1032 from Corynebacterium kroppenstedtii (strain DSM 44385 / JCM 11950 / CIP 105744 / CCUG 35717).